The following is a 340-amino-acid chain: S-adenosylmethionine:tRNA ribosyltransferase-isomerase (340 aa).

Belongs to the QueA family. As to quaternary structure, monomer.

Its subcellular location is the cytoplasm. The catalysed reaction is 7-aminomethyl-7-carbaguanosine(34) in tRNA + S-adenosyl-L-methionine = epoxyqueuosine(34) in tRNA + adenine + L-methionine + 2 H(+). It functions in the pathway tRNA modification; tRNA-queuosine biosynthesis. In terms of biological role, transfers and isomerizes the ribose moiety from AdoMet to the 7-aminomethyl group of 7-deazaguanine (preQ1-tRNA) to give epoxyqueuosine (oQ-tRNA). The protein is S-adenosylmethionine:tRNA ribosyltransferase-isomerase of Chlorobaculum parvum (strain DSM 263 / NCIMB 8327) (Chlorobium vibrioforme subsp. thiosulfatophilum).